The following is a 143-amino-acid chain: MTEITNLQDKVDVDETLLNIITQAVSLTLNEEGRAGVVSIALVDNNYIQSLNREYRQKDVPTDVLSFPLADDKDDEVLGDVVISLEKAAEQAKEYGHSFFREVAFLTVHGVLHLLGHDHYEEEETRIMREKEEKILSALGLER.

Histidine 109, histidine 113, and histidine 119 together coordinate Zn(2+).

This sequence belongs to the endoribonuclease YbeY family. Requires Zn(2+) as cofactor.

The protein localises to the cytoplasm. Single strand-specific metallo-endoribonuclease involved in late-stage 70S ribosome quality control and in maturation of the 3' terminus of the 16S rRNA. The chain is Endoribonuclease YbeY from Carboxydothermus hydrogenoformans (strain ATCC BAA-161 / DSM 6008 / Z-2901).